The primary structure comprises 358 residues: 3-isopropylmalate dehydrogenase (358 aa).

An NAD(+)-binding site is contributed by 77–90 (GPKWTNLPPDQQPE). Positions 98, 108, 137, and 226 each coordinate substrate. The Mg(2+) site is built by D226, D250, and D254. Residue 284–296 (GSAPDIAGKGIAN) coordinates NAD(+).

It belongs to the isocitrate and isopropylmalate dehydrogenases family. LeuB type 1 subfamily. In terms of assembly, homodimer. Requires Mg(2+) as cofactor. Mn(2+) serves as cofactor.

It localises to the cytoplasm. The catalysed reaction is (2R,3S)-3-isopropylmalate + NAD(+) = 4-methyl-2-oxopentanoate + CO2 + NADH. The protein operates within amino-acid biosynthesis; L-leucine biosynthesis; L-leucine from 3-methyl-2-oxobutanoate: step 3/4. Functionally, catalyzes the oxidation of 3-carboxy-2-hydroxy-4-methylpentanoate (3-isopropylmalate) to 3-carboxy-4-methyl-2-oxopentanoate. The product decarboxylates to 4-methyl-2 oxopentanoate. This chain is 3-isopropylmalate dehydrogenase (leuB), found in Haemophilus influenzae (strain ATCC 51907 / DSM 11121 / KW20 / Rd).